We begin with the raw amino-acid sequence, 519 residues long: Ribonuclease Y (519 aa).

A helical transmembrane segment spans residues proline 3–valine 23. Positions threonine 209–leucine 272 constitute a KH domain. Positions valine 335 to alanine 428 constitute an HD domain.

The protein belongs to the RNase Y family.

It localises to the cell membrane. In terms of biological role, endoribonuclease that initiates mRNA decay. The sequence is that of Ribonuclease Y from Bacillus velezensis (strain DSM 23117 / BGSC 10A6 / LMG 26770 / FZB42) (Bacillus amyloliquefaciens subsp. plantarum).